The primary structure comprises 276 residues: Urease accessory protein UreD (276 aa).

Belongs to the UreD family. As to quaternary structure, ureD, UreF and UreG form a complex that acts as a GTP-hydrolysis-dependent molecular chaperone, activating the urease apoprotein by helping to assemble the nickel containing metallocenter of UreC. The UreE protein probably delivers the nickel.

The protein localises to the cytoplasm. Required for maturation of urease via the functional incorporation of the urease nickel metallocenter. The sequence is that of Urease accessory protein UreD from Variovorax paradoxus (strain S110).